Reading from the N-terminus, the 89-residue chain is Putative defensin-like protein 230 (89 aa).

Positions 1–26 (MRSVIWFIVSYTLMLLVLRGGKEVEA) are cleaved as a signal peptide. 4 cysteine pairs are disulfide-bonded: cysteine 30/cysteine 84, cysteine 40/cysteine 65, cysteine 48/cysteine 78, and cysteine 63/cysteine 80.

This sequence belongs to the DEFL family.

It localises to the secreted. The chain is Putative defensin-like protein 230 (SCRL24) from Arabidopsis thaliana (Mouse-ear cress).